The primary structure comprises 397 residues: MAKEKFDRSLPHVNVGTIGHVDHGKTTLTAALTRVCSEVFGSAIVEFDKIDSAPEEKARGITINTAHVEYNSTIRHYAHVDCPGHADYVKNMITGAAQMDGAILVCSAADGPMPQTREHILLSRQVGVPYIVVFLNKADLVDDAELLELVEMEVRDLLSTYDFPGDDTPIIIGSARMALEGKDDNEMGTTAVKKLVETLDSYIPEPVRAIDQPFLMPIEDVFSISGRGTVVTGRIERGIVRVQDPLEIVGLRDTTTTTCTGVEMFRKLLDEGRAGENCGVLLRGTKRDDVERGQVLVKPGSVKPHTKFTAEVYVLSKEEGGRHTPFFKGYRPQFYFRTTDVTGNCELPEGVEMVMPGDNIQMTVTLIKTIAMEDGLRFAIREGGRTVGAGVVAKIIE.

The tr-type G domain occupies 10–207 (LPHVNVGTIG…TLDSYIPEPV (198 aa)). A G1 region spans residues 19–26 (GHVDHGKT). 19–26 (GHVDHGKT) lines the GTP pocket. Position 26 (threonine 26) interacts with Mg(2+). The tract at residues 60–64 (GITIN) is G2. The G3 stretch occupies residues 81 to 84 (DCPG). Residues 81-85 (DCPGH) and 136-139 (NKAD) contribute to the GTP site. The segment at 136-139 (NKAD) is G4. The interval 174–176 (SAR) is G5.

This sequence belongs to the TRAFAC class translation factor GTPase superfamily. Classic translation factor GTPase family. EF-Tu/EF-1A subfamily. As to quaternary structure, monomer.

The protein resides in the cytoplasm. It catalyses the reaction GTP + H2O = GDP + phosphate + H(+). Its function is as follows. GTP hydrolase that promotes the GTP-dependent binding of aminoacyl-tRNA to the A-site of ribosomes during protein biosynthesis. This is Elongation factor Tu from Pseudomonas putida (strain ATCC 700007 / DSM 6899 / JCM 31910 / BCRC 17059 / LMG 24140 / F1).